A 600-amino-acid chain; its full sequence is MCGIVGYIGQLDAKEILLKGLEKLEYRGYDSAGIAVANEDGVHVFKEKGRIADLRAAVDANVKSQAGIGHTRWATHGEPSRLNAHPHQSASGRFTLVHNGVIENYVQLTREYLHDVTLKSDTDTEVVVQVIEQFVNNGLDTEEAFRQTLMLLKGSYAIALFDHENKETIYVAKNKSPLLVGLGDNFNVVASDAMAMLQVTNEYVELMDKEMVIVTDKKVVIKNLDGELMSRASYIAELDASDIEKGTYPHYMLKEIDEQPLVMRKIIQTYQDENGKLSIPGDISNAVAEADRVYIIACGTSYHAGLVGKQFIETWAKVPAEVHVASEFSYNMPLLSEKPLFIFISQSGETADSRAVLVQVKKLGHKALTLTNVPGSTLSREADYTLLLNAGPEIAVASTKAYTAQIAVLAILAAVTAESRGKELGFDLVKELGIIGNAMEALCDQKDEMEMIAREYLTVTRNAFFIGRGLDYFVCLEGSLKLKEISYIQAEGFAGGELKHGTIALIEDGTPVIALATQEHVNLSIRGNVKEVTARGANPCVISLKGLEEADDRFVLPEVHPELAPLVSVIPLQLIAYYAALHRGCDVDKPRNLAKSVTVE.

Residue Cys-2 is the Nucleophile; for GATase activity of the active site. The 216-residue stretch at 2-217 folds into the Glutamine amidotransferase type-2 domain; sequence CGIVGYIGQL…DKEMVIVTDK (216 aa). SIS domains lie at 283–422 and 452–590; these read ISNA…SRGK and IARE…VDKP. The For Fru-6P isomerization activity role is filled by Lys-595.

As to quaternary structure, homodimer.

Its subcellular location is the cytoplasm. The catalysed reaction is D-fructose 6-phosphate + L-glutamine = D-glucosamine 6-phosphate + L-glutamate. In terms of biological role, catalyzes the first step in hexosamine metabolism, converting fructose-6P into glucosamine-6P using glutamine as a nitrogen source. This is Glutamine--fructose-6-phosphate aminotransferase [isomerizing] from Bacillus licheniformis (strain ATCC 14580 / DSM 13 / JCM 2505 / CCUG 7422 / NBRC 12200 / NCIMB 9375 / NCTC 10341 / NRRL NRS-1264 / Gibson 46).